The following is a 261-amino-acid chain: 5'-nucleotidase SurE (261 aa).

Residues D8, D9, S40, and N94 each contribute to the a divalent metal cation site.

The protein belongs to the SurE nucleotidase family. A divalent metal cation serves as cofactor.

The protein resides in the cytoplasm. It carries out the reaction a ribonucleoside 5'-phosphate + H2O = a ribonucleoside + phosphate. Functionally, nucleotidase that shows phosphatase activity on nucleoside 5'-monophosphates. The polypeptide is 5'-nucleotidase SurE (Anaplasma marginale (strain St. Maries)).